The following is a 171-amino-acid chain: Tetratricopeptide repeat protein 9C (171 aa).

TPR repeat units lie at residues 8 to 41 (AQVY…LRGL), 72 to 107 (THCY…QPDN), and 108 to 141 (AKAL…QPKD).

Belongs to the TTC9 family.

The chain is Tetratricopeptide repeat protein 9C (Ttc9c) from Mus musculus (Mouse).